The primary structure comprises 225 residues: Uridylate kinase (225 aa).

9 to 10 (GS) contacts ATP. Glycine 44 serves as a coordination point for UMP. ATP is bound by residues glycine 45 and arginine 49. UMP contacts are provided by residues aspartate 66 and 114–120 (THPGHTT). The ATP site is built by threonine 140, asparagine 141, tyrosine 146, and aspartate 149.

The protein belongs to the UMP kinase family. In terms of assembly, homohexamer.

Its subcellular location is the cytoplasm. It catalyses the reaction UMP + ATP = UDP + ADP. It participates in pyrimidine metabolism; CTP biosynthesis via de novo pathway; UDP from UMP (UMPK route): step 1/1. Its activity is regulated as follows. Inhibited by UTP. Its function is as follows. Catalyzes the reversible phosphorylation of UMP to UDP. This is Uridylate kinase from Thermococcus sibiricus (strain DSM 12597 / MM 739).